Here is a 160-residue protein sequence, read N- to C-terminus: C-type lectin mosGCTL-1 (160 aa).

The signal sequence occupies residues 1–20 (MLTKGITLILLLVLVHSSHG). In terms of domain architecture, C-type lectin spans 23–140 (TPNRKFYIPS…YHWSWNDNTC (118 aa)). 2 disulfides stabilise this stretch: cysteine 44–cysteine 140 and cysteine 120–cysteine 140. The N-linked (GlcNAc...) asparagine glycan is linked to asparagine 76.

In terms of assembly, interacts with putative receptor-type tyrosine-protein phosphatase mosPTP-1; the interaction probably mediates the recruitment of West Nile virus particles in complex with C-type lectin mosGCTL-1 to the cell surface. As to quaternary structure, (Microbial infection) Interacts with envelope protein E and virions of West Nile virus in a calcium-dependent manner. As to expression, female salivary gland (at protein level).

It is found in the secreted. Functionally, putative lectin. Its function is as follows. (Microbial infection) Facilitates West Nile virus infection in mosquitoes probably via capturing viral particles and presenting them to a ligand on the cell surface, thereby facilitating viral entry. The sequence is that of C-type lectin mosGCTL-1 from Aedes aegypti (Yellowfever mosquito).